Reading from the N-terminus, the 600-residue chain is Aspartate--tRNA(Asp/Asn) ligase (600 aa).

E174 is a binding site for L-aspartate. An aspartate region spans residues 198-201 (QLFK). L-aspartate is bound at residue R220. Residues 220–222 (RDE) and Q229 contribute to the ATP site. Position 457 (H457) interacts with L-aspartate. E491 serves as a coordination point for ATP. R498 provides a ligand contact to L-aspartate. ATP is bound at residue 543 to 546 (GLDR).

Belongs to the class-II aminoacyl-tRNA synthetase family. Type 1 subfamily. As to quaternary structure, homodimer.

It localises to the cytoplasm. It catalyses the reaction tRNA(Asx) + L-aspartate + ATP = L-aspartyl-tRNA(Asx) + AMP + diphosphate. Aspartyl-tRNA synthetase with relaxed tRNA specificity since it is able to aspartylate not only its cognate tRNA(Asp) but also tRNA(Asn). Reaction proceeds in two steps: L-aspartate is first activated by ATP to form Asp-AMP and then transferred to the acceptor end of tRNA(Asp/Asn). This Burkholderia pseudomallei (strain 668) protein is Aspartate--tRNA(Asp/Asn) ligase.